A 75-amino-acid chain; its full sequence is Putative DNA-directed RNA polymerase subunit omega (75 aa).

The protein belongs to the RNA polymerase subunit omega family.

It localises to the plastid. It is found in the chloroplast. It catalyses the reaction RNA(n) + a ribonucleoside 5'-triphosphate = RNA(n+1) + diphosphate. In terms of biological role, may be involved in RNA polymerase activity. In Porphyra purpurea (Red seaweed), this protein is Putative DNA-directed RNA polymerase subunit omega (rpoZ).